The following is a 690-amino-acid chain: Protein arginine N-methyltransferase 7 (690 aa).

2 consecutive SAM-dependent MTase PRMT-type domains span residues 14–357 (QNSW…YSLW) and 366–690 (TKSV…QKKL).

It belongs to the class I-like SAM-binding methyltransferase superfamily. Protein arginine N-methyltransferase family. PRMT7 subfamily.

Functionally, essential arginine methyltransferase that can both catalyze the formation of omega-N monomethylarginine (MMA) and symmetrical dimethylarginine (sDMA). Specifically mediates the symmetrical dimethylation of arginine residues in the small nuclear ribonucleoproteins SmD1 and SmD3. In Drosophila sechellia (Fruit fly), this protein is Protein arginine N-methyltransferase 7 (Art7).